We begin with the raw amino-acid sequence, 501 residues long: Nucleic-acid-binding protein from transposon X-element (501 aa).

Disordered regions lie at residues 20 to 71 (SSPQ…GNSN) and 105 to 128 (AAAKRDAASAGTTSSAKRAQSKPP). The CCHC-type zinc finger occupies 285–302 (VQCHRCQQIGHTAKYCRK). Disordered regions lie at residues 353-385 (RPRSGVAGRTEVSDRPTPRGLAGGKEIPSSRGG) and 400-443 (QPMS…TDAS). Residues 407 to 422 (QQQKQKQQPYDGSPSR) show a composition bias toward low complexity. Over residues 434 to 443 (GTLQRSTDAS) the composition is skewed to polar residues.

It localises to the virion. Its function is as follows. Strongly basic protein that binds directly to retroviral RNA and may be involved in its packaging and in the reverse transcription process. This Drosophila melanogaster (Fruit fly) protein is Nucleic-acid-binding protein from transposon X-element.